Reading from the N-terminus, the 205-residue chain is Guanylyl cyclase-activating protein 1 (205 aa).

Glycine 2 carries the N-myristoyl glycine lipid modification. Deamidated asparagine is present on asparagine 3. 4 consecutive EF-hand domains span residues 14–49 (SSTE…KNLS), 51–86 (WASQ…VLKG), 87–122 (KVEQ…IRAI), and 131–166 (TAEE…DQML). The Ca(2+) site is built by aspartate 64, asparagine 66, aspartate 68, tyrosine 70, glutamate 75, aspartate 100, aspartate 102, asparagine 104, cysteine 106, glutamate 111, aspartate 144, asparagine 146, aspartate 148, glutamate 150, and glutamate 155. The disordered stretch occupies residues 185–205 (NGEQDEEGASGRETEAAEADG).

In terms of assembly, homodimer. As to expression, detected in the retina. Detected in rod and cone photoreceptor cells (at protein level). Also present in certain pinealocytes.

It is found in the membrane. The protein resides in the photoreceptor inner segment. Its subcellular location is the cell projection. It localises to the cilium. The protein localises to the photoreceptor outer segment. In terms of biological role, stimulates retinal guanylyl cyclase when free calcium ions concentration is low and inhibits guanylyl cyclase when free calcium ions concentration is elevated. This Ca(2+)-sensitive regulation of retinal guanylyl cyclase is a key event in recovery of the dark state of rod photoreceptors following light exposure. May be involved in cone photoreceptor light response and recovery of response in bright light. The protein is Guanylyl cyclase-activating protein 1 (GUCA1A) of Bos taurus (Bovine).